The chain runs to 184 residues: C-phycoerythrin class 1 subunit beta (184 aa).

C50 and C61 together coordinate (2R,3E)-phycoerythrobilin. At N72 the chain carries N4-methylasparagine. (2R,3E)-phycoerythrobilin is bound by residues C82 and C165.

The protein belongs to the phycobiliprotein family. In terms of assembly, heterodimer of an alpha and a beta chain. In terms of processing, contains three covalently linked phycoerythrobilin chromophores.

It localises to the cellular thylakoid membrane. In terms of biological role, light-harvesting photosynthetic bile pigment-protein from the phycobiliprotein complex. The chain is C-phycoerythrin class 1 subunit beta (cpeB) from Synechococcus sp. (strain WH8020).